A 79-amino-acid chain; its full sequence is Sulfur carrier protein TusA (79 aa).

The active-site Cysteine persulfide intermediate is the C17.

Belongs to the sulfur carrier protein TusA family.

It localises to the cytoplasm. Sulfur carrier protein which probably makes part of a sulfur-relay system. In Haemophilus ducreyi (strain 35000HP / ATCC 700724), this protein is Sulfur carrier protein TusA.